The chain runs to 736 residues: Serine/threonine-protein kinase BRSK2 (736 aa).

Residues 19 to 270 form the Protein kinase domain; sequence YRLEKTLGKG…LEHIQKHIWY (252 aa). ATP-binding positions include 25–33 and lysine 48; that span reads LGKGQTGLV. Aspartate 141 serves as the catalytic Proton acceptor. At threonine 174 the chain carries Phosphothreonine; by LKB1. A Phosphothreonine; by PKA modification is found at threonine 260. Serine 294 carries the phosphoserine modification. The 43-residue stretch at 297–339 folds into the UBA domain; that stretch reads DIDPDVLDSMHSLGCFRDRNKLLQDLLSEEENQEKMIYFLLLD. The span at 345 to 366 shows a compositional bias: basic and acidic residues; it reads PSQEDEDLPPRNEIDPPRKRVD. 2 disordered regions span residues 345–475 and 493–513; these read PSQE…GVPW and HRRK…PESS. Phosphoserine occurs at positions 367, 382, 393, 412, 416, 423, and 427. Residues 410-428 are compositionally biased toward low complexity; the sequence is SRSISGASSGLSTSPLSSP. Positions 431–445 are enriched in pro residues; it reads TPHPSPRGSPLPTPK. The residue at position 455 (serine 455) is a Phosphoserine. Threonine 459, threonine 463, and threonine 509 each carry phosphothreonine. 3 positions are modified to phosphoserine: serine 512, serine 513, and serine 520. The KEN box motif lies at 603–605; that stretch reads KEN. The tract at residues 681–736 is disordered; it reads KNGQAAQAPSTPAKRSAHGPLGDSAAAGPGPGGDAEYPTGKDTAKMGPPTARREQP. Residues 699–708 show a composition bias toward low complexity; the sequence is GPLGDSAAAG.

It belongs to the protein kinase superfamily. CAMK Ser/Thr protein kinase family. SNF1 subfamily. Interacts with FZR1, a regulatory subunit of the APC ubiquitin ligase complex. Interacts with COPS5. Interacts with PAK1. Requires Mg(2+) as cofactor. Phosphorylated at Thr-174 by STK11/LKB1 in complex with STE20-related adapter-alpha (STRADA) pseudo kinase and CAB39. Not phosphorylated at Thr-174 by CaMKK2. In contrast, it is phosphorylated and activated by CaMKK1. May be inactivated via dephosphorylation of Thr-174 by PP2C. Phosphorylated at Thr-260 by PKA. Phosphorylation at Thr-260 by PKA was not observed in another study, but this may reflect differences in the experimental approach. Phosphorylation at Thr-260 seems to play a role in the regulation of insulin secretion. In terms of processing, polyubiquitinated by the APC complex in conjunction with FZR1, leading to its proteasomal degradation. Targeted for proteasomal degradation by interaction with COPS5. BRSK2 levels change during the cell cycle. BRSK2 levels are low at the G1/S boundary and gradually increase as cells progress into G2 phase. BRSK2 levels decrease rapidly at the end of mitosis. In terms of tissue distribution, detected in pancreas islets (at protein level).

The protein resides in the cytoplasm. It localises to the cytoskeleton. Its subcellular location is the microtubule organizing center. The protein localises to the centrosome. It is found in the perinuclear region. The protein resides in the endoplasmic reticulum. The enzyme catalyses L-seryl-[protein] + ATP = O-phospho-L-seryl-[protein] + ADP + H(+). It carries out the reaction L-threonyl-[protein] + ATP = O-phospho-L-threonyl-[protein] + ADP + H(+). It catalyses the reaction L-seryl-[tau protein] + ATP = O-phospho-L-seryl-[tau protein] + ADP + H(+). The catalysed reaction is L-threonyl-[tau protein] + ATP = O-phospho-L-threonyl-[tau protein] + ADP + H(+). Its activity is regulated as follows. Activated by phosphorylation on Thr-174 by STK11/LKB1. Its function is as follows. Serine/threonine-protein kinase that plays a key role in polarization of neurons and axonogenesis, cell cycle progress and insulin secretion. Phosphorylates CDK16, CDC25C, MAPT/TAU, PAK1 and WEE1. Following phosphorylation and activation by STK11/LKB1, acts as a key regulator of polarization of cortical neurons, probably by mediating phosphorylation of microtubule-associated proteins such as MAPT/TAU at 'Thr-529' and 'Ser-579'. Also regulates neuron polarization by mediating phosphorylation of WEE1 at 'Ser-642' in postmitotic neurons, leading to down-regulate WEE1 activity in polarized neurons. Plays a role in the regulation of the mitotic cell cycle progress and the onset of mitosis. Plays a role in the regulation of insulin secretion in response to elevated glucose levels, probably via phosphorylation of CDK16 and PAK1. While BRSK2 phosphorylated at Thr-174 can inhibit insulin secretion, BRSK2 phosphorylated at Thr-260 can promote insulin secretion. Regulates reorganization of the actin cytoskeleton. May play a role in the apoptotic response triggered by endoplasmic reticulum (ER) stress. The sequence is that of Serine/threonine-protein kinase BRSK2 (BRSK2) from Homo sapiens (Human).